A 951-amino-acid polypeptide reads, in one-letter code: WD repeat-containing and planar cell polarity effector protein fritz (951 aa).

WD repeat units lie at residues 304–343 and 345–384; these read PMGA…TKYA and QIEI…IGHQ. 3 stretches are compositionally biased toward polar residues: residues 709-720, 757-771, and 818-828; these read TLKSNSSLQQAP, IPDQ…STMP, and SILSNPANPAP. 3 disordered regions span residues 709 to 776, 816 to 883, and 903 to 951; these read TLKS…SPPP, TASI…AARH, and EYLK…FGVV. Positions 930–942 are enriched in low complexity; it reads SSKGGNSSSSSSS.

The protein belongs to the WD repeat fritz family.

The protein resides in the cell membrane. Its subcellular location is the cytoplasm. It is found in the cytoskeleton. It localises to the cilium axoneme. Its function is as follows. Probable effector of the planar cell polarity signaling pathway which regulates the septin cytoskeleton in both ciliogenesis and collective cell movements. Functions cell autonomously to regulate wing cell hair polarity and number. This Drosophila melanogaster (Fruit fly) protein is WD repeat-containing and planar cell polarity effector protein fritz (frtz).